We begin with the raw amino-acid sequence, 1287 residues long: DENN domain-containing protein 5A (1287 aa).

In terms of domain architecture, uDENN spans 57 to 259 (STTEGENFEQ…EVPLPPPGRS (203 aa)). Position 193 is a phosphoserine (S193). In terms of domain architecture, cDENN spans 278 to 414 (ELPLFDFPVK…LEFVQEVSEI (137 aa)). The region spanning 416–598 (MAFGVPPEGN…IMCHDDDDKD (183 aa)) is the dDENN domain. The RUN 1 domain maps to 787 to 950 (VEENTLIASL…DYFCFTNVFT (164 aa)). Residues 954 to 1062 (IPYHILIVPS…DDGSLERVLV (109 aa)) enclose the PLAT domain. T1079 carries the post-translational modification Phosphothreonine. Phosphoserine is present on residues S1085, S1087, and S1096. The RUN 2 domain occupies 1134–1280 (TLLLCGECGL…QEFNITLDTS (147 aa)).

The protein belongs to the RAB6IP1 family. Interacts with RAB6A bound to GTP. As to expression, expressed in developing brain and developing neurons.

It localises to the golgi apparatus membrane. Guanine nucleotide exchange factor (GEF) which may activate RAB6A and RAB39A and/or RAB39B. Promotes the exchange of GDP to GTP, converting inactive GDP-bound Rab proteins into their active GTP-bound form. Involved in the negative regulation of neurite outgrowth. This is DENN domain-containing protein 5A (Dennd5a) from Rattus norvegicus (Rat).